Reading from the N-terminus, the 69-residue chain is Putative membrane protein insertion efficiency factor (69 aa).

The protein belongs to the UPF0161 family.

It is found in the cell inner membrane. Functionally, could be involved in insertion of integral membrane proteins into the membrane. In Aromatoleum aromaticum (strain DSM 19018 / LMG 30748 / EbN1) (Azoarcus sp. (strain EbN1)), this protein is Putative membrane protein insertion efficiency factor.